Reading from the N-terminus, the 438-residue chain is Xylose isomerase (438 aa).

2 residues coordinate Mg(2+): aspartate 306 and aspartate 308.

It belongs to the xylose isomerase family. In terms of assembly, homotetramer. It depends on Mg(2+) as a cofactor.

It localises to the cytoplasm. The catalysed reaction is alpha-D-xylose = alpha-D-xylulofuranose. This is Xylose isomerase from Caldicellulosiruptor bescii (strain ATCC BAA-1888 / DSM 6725 / KCTC 15123 / Z-1320) (Anaerocellum thermophilum).